The sequence spans 38 residues: Large ribosomal subunit protein bL36 (38 aa).

Belongs to the bacterial ribosomal protein bL36 family.

This is Large ribosomal subunit protein bL36 from Thermotoga maritima (strain ATCC 43589 / DSM 3109 / JCM 10099 / NBRC 100826 / MSB8).